The chain runs to 483 residues: Probable gamma-aminobutyrate transaminase 4 (483 aa).

Position 138 to 139 (138 to 139) interacts with pyridoxal 5'-phosphate; it reads GS. Tyrosine 171 is a substrate binding site. A pyridoxal 5'-phosphate-binding site is contributed by aspartate 278. Lysine 307 serves as a coordination point for substrate. Lysine 307 carries the N6-(pyridoxal phosphate)lysine modification.

This sequence belongs to the class-III pyridoxal-phosphate-dependent aminotransferase family. Not detected in roots, stems, flowers or leaves of healthy plants.

It localises to the cytoplasm. The enzyme catalyses 4-aminobutanoate + pyruvate = succinate semialdehyde + L-alanine. The catalysed reaction is 4-aminobutanoate + glyoxylate = succinate semialdehyde + glycine. In terms of biological role, transaminase that degrades gamma-amino butyric acid (GABA). In Oryza sativa subsp. japonica (Rice), this protein is Probable gamma-aminobutyrate transaminase 4 (GABA-T).